The following is a 501-amino-acid chain: Cytochrome P450 2J1 (501 aa).

Residue C447 participates in heme binding.

Belongs to the cytochrome P450 family. Heme is required as a cofactor. Small intestine.

Its subcellular location is the endoplasmic reticulum membrane. The protein localises to the microsome membrane. The catalysed reaction is an organic molecule + reduced [NADPH--hemoprotein reductase] + O2 = an alcohol + oxidized [NADPH--hemoprotein reductase] + H2O + H(+). In terms of biological role, catalyzes the N-demethylation of benzphetamine to formaldehyde. The chain is Cytochrome P450 2J1 (CYP2J1) from Oryctolagus cuniculus (Rabbit).